Consider the following 92-residue polypeptide: cAMP-dependent protein kinase inhibitor beta (92 aa).

The tract at residues 1-26 (MGGGTSPEAQQDSVMRTDSSEMTDVE) is disordered. The segment covering 7 to 26 (PEAQQDSVMRTDSSEMTDVE) has biased composition (polar residues). The residue at position 56 (Ser56) is a Phosphoserine. The span at 70–82 (EDAKTKNEEKDQG) shows a compositional bias: basic and acidic residues. The tract at residues 70–92 (EDAKTKNEEKDQGQPKTPLNEGK) is disordered.

This sequence belongs to the PKI family.

Its function is as follows. Extremely potent competitive inhibitor of cAMP-dependent protein kinase activity, this protein interacts with the catalytic subunit of the enzyme after the cAMP-induced dissociation of its regulatory chains. The polypeptide is cAMP-dependent protein kinase inhibitor beta (Pkib) (Mus musculus (Mouse)).